We begin with the raw amino-acid sequence, 484 residues long: Glutamyl-tRNA(Gln) amidotransferase subunit A (484 aa).

Catalysis depends on charge relay system residues lysine 76 and serine 151. Serine 175 (acyl-ester intermediate) is an active-site residue.

The protein belongs to the amidase family. GatA subfamily. Heterotrimer of A, B and C subunits.

The enzyme catalyses L-glutamyl-tRNA(Gln) + L-glutamine + ATP + H2O = L-glutaminyl-tRNA(Gln) + L-glutamate + ADP + phosphate + H(+). Its function is as follows. Allows the formation of correctly charged Gln-tRNA(Gln) through the transamidation of misacylated Glu-tRNA(Gln) in organisms which lack glutaminyl-tRNA synthetase. The reaction takes place in the presence of glutamine and ATP through an activated gamma-phospho-Glu-tRNA(Gln). In Saccharophagus degradans (strain 2-40 / ATCC 43961 / DSM 17024), this protein is Glutamyl-tRNA(Gln) amidotransferase subunit A.